We begin with the raw amino-acid sequence, 88 residues long: Small ribosomal subunit protein bS20 (88 aa).

The interval 1-27 (MANTKQAQKRARQAEQRRQHNASQRSM) is disordered.

Belongs to the bacterial ribosomal protein bS20 family.

Binds directly to 16S ribosomal RNA. This Chromohalobacter salexigens (strain ATCC BAA-138 / DSM 3043 / CIP 106854 / NCIMB 13768 / 1H11) protein is Small ribosomal subunit protein bS20.